The primary structure comprises 340 residues: Fructose-1,6-bisphosphatase class 1 (340 aa).

The Mg(2+) site is built by Glu-107, Asp-126, Leu-128, and Asp-129. Asn-215 is a binding site for substrate. A Mg(2+)-binding site is contributed by Glu-287.

It belongs to the FBPase class 1 family. As to quaternary structure, homotetramer. Mg(2+) is required as a cofactor.

It is found in the cytoplasm. The catalysed reaction is beta-D-fructose 1,6-bisphosphate + H2O = beta-D-fructose 6-phosphate + phosphate. The protein operates within carbohydrate biosynthesis; gluconeogenesis. The protein is Fructose-1,6-bisphosphatase class 1 of Brucella anthropi (strain ATCC 49188 / DSM 6882 / CCUG 24695 / JCM 21032 / LMG 3331 / NBRC 15819 / NCTC 12168 / Alc 37) (Ochrobactrum anthropi).